The following is a 147-amino-acid chain: Protein-export protein SecB (147 aa).

Belongs to the SecB family. In terms of assembly, homotetramer, a dimer of dimers. One homotetramer interacts with 1 SecA dimer.

It localises to the cytoplasm. Functionally, one of the proteins required for the normal export of preproteins out of the cell cytoplasm. It is a molecular chaperone that binds to a subset of precursor proteins, maintaining them in a translocation-competent state. It also specifically binds to its receptor SecA. In Neisseria meningitidis serogroup A / serotype 4A (strain DSM 15465 / Z2491), this protein is Protein-export protein SecB.